Here is a 196-residue protein sequence, read N- to C-terminus: Small ribosomal subunit protein uS4c (196 aa).

The 81-residue stretch at 89-169 (MRLDNIIFRL…LPKHLTIDTV (81 aa)) folds into the S4 RNA-binding domain.

Belongs to the universal ribosomal protein uS4 family. In terms of assembly, part of the 30S ribosomal subunit. Contacts protein S5. The interaction surface between S4 and S5 is involved in control of translational fidelity.

It localises to the plastid. The protein localises to the chloroplast. One of the primary rRNA binding proteins, it binds directly to 16S rRNA where it nucleates assembly of the body of the 30S subunit. Functionally, with S5 and S12 plays an important role in translational accuracy. The chain is Small ribosomal subunit protein uS4c (rps4) from Stipellula capensis (Cape rice grass).